A 664-amino-acid polypeptide reads, in one-letter code: ATP-dependent zinc metalloprotease FtsH (664 aa).

Topologically, residues 1–9 (MKQNIKRNW) are cytoplasmic. Residues 10–30 (IWILIVMIVIGIILYFSIRNL) traverse the membrane as a helical segment. At 31-136 (FSTKVAEWSI…KSVATPQPNP (106 aa)) the chain is on the extracellular side. Residues 137–157 (FLGILISSVPVLILIFVMVWI) form a helical membrane-spanning segment. Residues 158 to 664 (YRSQVKMMNG…SLIEKTSKKE (507 aa)) lie on the Cytoplasmic side of the membrane. 229 to 236 (GPPGTGKT) is a binding site for ATP. H451 contacts Zn(2+). E452 is a catalytic residue. Zn(2+) contacts are provided by H455 and D529. Residues 639-649 (IEEKDLSKNSE) are compositionally biased toward basic and acidic residues. The interval 639–664 (IEEKDLSKNSEDNNLDSLIEKTSKKE) is disordered.

In the central section; belongs to the AAA ATPase family. The protein in the C-terminal section; belongs to the peptidase M41 family. As to quaternary structure, homohexamer. Zn(2+) serves as cofactor.

Its subcellular location is the cell membrane. Functionally, acts as a processive, ATP-dependent zinc metallopeptidase for both cytoplasmic and membrane proteins. Plays a role in the quality control of integral membrane proteins. This chain is ATP-dependent zinc metalloprotease FtsH, found in Mycoplasmopsis synoviae (strain 53) (Mycoplasma synoviae).